The chain runs to 290 residues: MLKTVHQKAGRHTRPVRAWLKLLWQRIDEDNMTTLAGNLAYVSLLSLVPLIAVVFALFAAFPMFSDVSIQLRHFIFANFMPATGDVIQRYIEQFVANSNKMTAVGACGLIVTALLLMYAIDSALNTIWRSKRTRPKVYSFAVYWMILTLGPLLAGASLAISSYLLSLRWASDLNTVIDNVLRVLPLLLSWISFWLLYSIVPTTRVPNRDAIVGAFVAALLFEAGKKGFALYITMFPSYQLIYGVLAVIPILFVWVYWTWCIVLLGAEITVTLGEYRKLKQAAEQEEADQP.

6 helical membrane passes run 44–64, 104–124, 140–160, 183–203, 210–230, and 244–264; these read LLSL…FPMF, VGAC…DSAL, FAVY…SLAI, VLPL…VPTT, AIVG…GFAL, and VLAV…IVLL.

The protein belongs to the UPF0761 family.

It localises to the cell inner membrane. The chain is UPF0761 membrane protein YihY from Salmonella arizonae (strain ATCC BAA-731 / CDC346-86 / RSK2980).